The chain runs to 86 residues: Small ribosomal subunit protein uS15 (86 aa).

The protein belongs to the universal ribosomal protein uS15 family. Part of the 30S ribosomal subunit. Forms a bridge to the 50S subunit in the 70S ribosome, contacting the 23S rRNA.

Functionally, one of the primary rRNA binding proteins, it binds directly to 16S rRNA where it helps nucleate assembly of the platform of the 30S subunit by binding and bridging several RNA helices of the 16S rRNA. Forms an intersubunit bridge (bridge B4) with the 23S rRNA of the 50S subunit in the ribosome. The chain is Small ribosomal subunit protein uS15 from Ruthia magnifica subsp. Calyptogena magnifica.